We begin with the raw amino-acid sequence, 229 residues long: uncharacterized protein (229 aa).

A disordered region spans residues 61–229; the sequence is MQAEDKVSKP…TESEDKPKRG (169 aa). The segment covering 109–128 has biased composition (basic and acidic residues); sequence QQEKQQPEKAVVEQQEKQQP. Over residues 166 to 194 the composition is skewed to low complexity; that stretch reads QPEQPERQQQAQPERQQQAQPERQQQAQP. Residues 195–204 show a composition bias toward acidic residues; it reads EEAEDAEQEP. The segment covering 218 to 229 has biased composition (basic and acidic residues); it reads TQTESEDKPKRG.

This is an uncharacterized protein from Frog virus 3 (isolate Goorha) (FV-3).